The sequence spans 495 residues: RNA-binding KH domain-containing protein PEPPER (495 aa).

KH domains lie at 73–140 (DCVF…MDAV), 165–234 (FSSV…LEAI), and 340–403 (QVSQ…EQLI). Residues 474–495 (GQTYGSEYRPASDVGGYSSYNL) are disordered.

As to quaternary structure, interacts with HUA1 and HEN4. Detected in roots, shoots, leaves, flowers and fruits.

It localises to the nucleus. Its function is as follows. Regulates vegetative and gynoecium development. In concert with HUA2, antagonizes FLK by positively regulating FLC probably at transcriptional and post-transcriptional levels, and thus acts as a negative regulator of flowering. The sequence is that of RNA-binding KH domain-containing protein PEPPER from Arabidopsis thaliana (Mouse-ear cress).